A 76-amino-acid chain; its full sequence is UPF0235 protein MMAR_2910 (76 aa).

It belongs to the UPF0235 family.

The chain is UPF0235 protein MMAR_2910 from Mycobacterium marinum (strain ATCC BAA-535 / M).